We begin with the raw amino-acid sequence, 696 residues long: UvrABC system protein C (696 aa).

A GIY-YIG domain is found at 16-95 (TEPGVYKFRD…IKRFDPRFNV (80 aa)). Residues 208–243 (DKVTRKLNADMMAAAEELDFERAARLRDDLEAIDKV) enclose the UVR domain.

This sequence belongs to the UvrC family. Interacts with UvrB in an incision complex.

The protein resides in the cytoplasm. Functionally, the UvrABC repair system catalyzes the recognition and processing of DNA lesions. UvrC both incises the 5' and 3' sides of the lesion. The N-terminal half is responsible for the 3' incision and the C-terminal half is responsible for the 5' incision. The sequence is that of UvrABC system protein C from Corynebacterium glutamicum (strain ATCC 13032 / DSM 20300 / JCM 1318 / BCRC 11384 / CCUG 27702 / LMG 3730 / NBRC 12168 / NCIMB 10025 / NRRL B-2784 / 534).